The chain runs to 680 residues: DNA-directed RNA polymerase subunit beta' (680 aa).

Residues Cys-69, Cys-71, Cys-87, and Cys-90 each coordinate Zn(2+). Mg(2+) is bound by residues Asp-489, Asp-491, and Asp-493.

This sequence belongs to the RNA polymerase beta' chain family. RpoC1 subfamily. In terms of assembly, in plastids the minimal PEP RNA polymerase catalytic core is composed of four subunits: alpha, beta, beta', and beta''. When a (nuclear-encoded) sigma factor is associated with the core the holoenzyme is formed, which can initiate transcription. Requires Mg(2+) as cofactor. Zn(2+) serves as cofactor.

It is found in the plastid. The protein resides in the chloroplast. It catalyses the reaction RNA(n) + a ribonucleoside 5'-triphosphate = RNA(n+1) + diphosphate. Functionally, DNA-dependent RNA polymerase catalyzes the transcription of DNA into RNA using the four ribonucleoside triphosphates as substrates. This chain is DNA-directed RNA polymerase subunit beta', found in Carica papaya (Papaya).